Here is a 331-residue protein sequence, read N- to C-terminus: Elongation factor Ts, mitochondrial (331 aa).

The interval 254–295 (SPLTVGEMPEVREEEGEKKDGDKQDEEERSTDSDEDETQMLR) is disordered. The span at 262-275 (PEVREEEGEKKDGD) shows a compositional bias: basic and acidic residues. Over residues 276 to 291 (KQDEEERSTDSDEDET) the composition is skewed to acidic residues.

Belongs to the EF-Ts family.

It is found in the mitochondrion. Functionally, associates with the EF-Tu.GDP complex and induces the exchange of GDP to GTP. It remains bound to the aminoacyl-tRNA.EF-Tu.GTP complex up to the GTP hydrolysis stage on the ribosome. This chain is Elongation factor Ts, mitochondrial, found in Branchiostoma floridae (Florida lancelet).